The primary structure comprises 999 residues: Probable basic-leucine zipper transcription factor N (999 aa).

Composition is skewed to low complexity over residues 1-79 (MYQS…YQQQ) and 88-126 (NNVNINNNNNNNVNINSQNNVNNNNNNNNNNNNGNINNN). Residues 1–126 (MYQSIPQQGN…NNNNGNINNN (126 aa)) form a disordered region. Coiled-coil stretches lie at residues 148-198 (QQQQ…MVLM) and 232-282 (GIQQ…QQIS). Residues 286–302 (ESASPYYSTPIQSNTML) are compositionally biased toward polar residues. Disordered stretches follow at residues 286-406 (ESAS…SQDQ), 450-533 (QQLH…PTIN), and 601-620 (EKQKTRRRASQNLASRNYRQ). A compositionally biased stretch (low complexity) spans 303 to 347 (SIPSSPGIPSSIPQLNNSNNINNNSNNNNNNNNNNNNNNINYNSN). Positions 348 to 406 (MASNFISQHSNNGSNTSSPVPQTTYLQNSGGNFNAYNGSNTNSPITPSSYLQPTTSQDQ) are enriched in polar residues. The stretch at 423-451 (IQQQQKILQQQQQQQLLLQQQIQQQQQQQ) forms a coiled coil. Residues 450-517 (QQLHQPQSPQ…IIQPTTIQPQ (68 aa)) are compositionally biased toward low complexity. Residues 601–664 (EKQKTRRRAS…KKLLHENNIL (64 aa)) form the bZIP domain. The segment at 602–632 (KQKTRRRASQNLASRNYRQRKKQYVNEVEDR) is basic motif. The leucine-zipper stretch occupies residues 636-643 (IVQENERL). Disordered regions lie at residues 665–711 (KSGG…VVET), 779–807 (QSCPFEDPSEKQHSDPNSSPIGDMPSPYE), and 870–899 (VNNGGNTKSKKTAASTSTTTTTTSTSTTTT). A compositionally biased stretch (acidic residues) spans 682 to 692 (SEDEDEDDFDQ). Positions 921 to 950 (HLVQLSGLLDKLKENIDHENETLIQTYEKL) form a coiled coil.

It belongs to the bZIP family.

It localises to the nucleus. Probable transcriptional regulator. The sequence is that of Probable basic-leucine zipper transcription factor N (bzpN) from Dictyostelium discoideum (Social amoeba).